A 107-amino-acid polypeptide reads, in one-letter code: Nucleoid-associated protein Hhal_0231 (107 aa).

Disordered regions lie at residues 1 to 24 and 82 to 107; these read MKGG…KAQE and VQRE…KLPF. Over residues 15-24 the composition is skewed to basic and acidic residues; that stretch reads MQEDMQKAQE.

This sequence belongs to the YbaB/EbfC family. Homodimer.

The protein localises to the cytoplasm. Its subcellular location is the nucleoid. Its function is as follows. Binds to DNA and alters its conformation. May be involved in regulation of gene expression, nucleoid organization and DNA protection. The chain is Nucleoid-associated protein Hhal_0231 from Halorhodospira halophila (strain DSM 244 / SL1) (Ectothiorhodospira halophila (strain DSM 244 / SL1)).